Reading from the N-terminus, the 198-residue chain is Protein GrpE (198 aa).

Over residues 1-14 (MSNEENKINEEALK) the composition is skewed to basic and acidic residues. Residues 1 to 20 (MSNEENKINEEALKQQDAAE) are disordered.

The protein belongs to the GrpE family. In terms of assembly, homodimer.

It localises to the cytoplasm. Functionally, participates actively in the response to hyperosmotic and heat shock by preventing the aggregation of stress-denatured proteins, in association with DnaK and GrpE. It is the nucleotide exchange factor for DnaK and may function as a thermosensor. Unfolded proteins bind initially to DnaJ; upon interaction with the DnaJ-bound protein, DnaK hydrolyzes its bound ATP, resulting in the formation of a stable complex. GrpE releases ADP from DnaK; ATP binding to DnaK triggers the release of the substrate protein, thus completing the reaction cycle. Several rounds of ATP-dependent interactions between DnaJ, DnaK and GrpE are required for fully efficient folding. This Vibrio vulnificus (strain YJ016) protein is Protein GrpE.